The chain runs to 243 residues: 3-deoxy-manno-octulosonate cytidylyltransferase (243 aa).

Belongs to the KdsB family.

It is found in the cytoplasm. It carries out the reaction 3-deoxy-alpha-D-manno-oct-2-ulosonate + CTP = CMP-3-deoxy-beta-D-manno-octulosonate + diphosphate. It functions in the pathway nucleotide-sugar biosynthesis; CMP-3-deoxy-D-manno-octulosonate biosynthesis; CMP-3-deoxy-D-manno-octulosonate from 3-deoxy-D-manno-octulosonate and CTP: step 1/1. Its pathway is bacterial outer membrane biogenesis; lipopolysaccharide biosynthesis. Its function is as follows. Activates KDO (a required 8-carbon sugar) for incorporation into bacterial lipopolysaccharide in Gram-negative bacteria. The chain is 3-deoxy-manno-octulosonate cytidylyltransferase from Helicobacter pylori (strain HPAG1).